Reading from the N-terminus, the 298-residue chain is MFNKDKVKIGIAPIAWTNDDMPELGAENTFEQCISEMALSGFKGTEVGNKYPRDTKVLKRALELRDMQIASAWFSAFLTTKPYEETEKAFIKHRDFLYEMRSKVIVISEQGHSIQGKMETPIFEEKPIFTEEEWKDLAKGLNKLGKLAKEKNMKVVYHHHMGTGVQTTEEIDKLMEMTDPTLVYLLYDTGHLVFSGEDPIVVLRKYINRIKHVHLKDIREDVVKIVKQKKMSFLQAVKLGAFTVPGDGDIDFKPVFNILAENNYEGWLLVEAEQDPARANPLEYAIKARKYIQEKAAI.

It belongs to the IolE/MocC family. It depends on glutathione as a cofactor. Co(2+) is required as a cofactor. Requires Mn(2+) as cofactor.

The catalysed reaction is scyllo-inosose = 3D-3,5/4-trihydroxycyclohexane-1,2-dione + H2O. The protein operates within polyol metabolism; myo-inositol degradation into acetyl-CoA; acetyl-CoA from myo-inositol: step 2/7. Functionally, catalyzes the dehydration of inosose (2-keto-myo-inositol, 2KMI or 2,4,6/3,5-pentahydroxycyclohexanone) to 3D-(3,5/4)-trihydroxycyclohexane-1,2-dione (D-2,3-diketo-4-deoxy-epi-inositol). This Clostridium tetani (strain Massachusetts / E88) protein is Inosose dehydratase.